The primary structure comprises 271 residues: Type III pantothenate kinase (271 aa).

6 to 13 (DVRNTHTV) contacts ATP. A substrate-binding site is contributed by 109-112 (GADR). Asp-111 serves as the catalytic Proton acceptor. Residue Asp-131 coordinates K(+). Ser-134 is a binding site for ATP. Thr-186 contributes to the substrate binding site.

Belongs to the type III pantothenate kinase family. In terms of assembly, homodimer. It depends on NH4(+) as a cofactor. K(+) serves as cofactor.

The protein localises to the cytoplasm. It catalyses the reaction (R)-pantothenate + ATP = (R)-4'-phosphopantothenate + ADP + H(+). The protein operates within cofactor biosynthesis; coenzyme A biosynthesis; CoA from (R)-pantothenate: step 1/5. Catalyzes the phosphorylation of pantothenate (Pan), the first step in CoA biosynthesis. The protein is Type III pantothenate kinase of Mycolicibacterium smegmatis (strain ATCC 700084 / mc(2)155) (Mycobacterium smegmatis).